A 306-amino-acid chain; its full sequence is Cathepsin Z (306 aa).

An N-terminal signal peptide occupies residues 1-20 (MLAILFNFFLLTYFTNITLG). The propeptide at 21–65 (KVGKSIDLDTRNGYNVHGCYKQTGKIYAHKTYPRQYEAENYNFDD) is activation peptide. 5 disulfide bridges follow: cysteine 39-cysteine 96, cysteine 93-cysteine 136, cysteine 130-cysteine 168, cysteine 158-cysteine 174, and cysteine 177-cysteine 182. The active site involves cysteine 96. Asparagine 187 carries N-linked (GlcNAc...) asparagine glycosylation. Residues cysteine 217 and cysteine 299 are joined by a disulfide bond. Residues histidine 243 and asparagine 265 contribute to the active site. Asparagine 286 carries N-linked (GlcNAc...) asparagine glycosylation.

The protein belongs to the peptidase C1 family.

It localises to the cytoplasmic vesicle. Its subcellular location is the secretory vesicle. The protein resides in the secreted. It carries out the reaction Release of C-terminal amino acid residues with broad specificity, but lacks action on C-terminal proline. Shows weak endopeptidase activity.. Its activity is regulated as follows. The disulfide bridge formed between Cys-39 in the propeptide and the active site residue Cys-96 may prevent activation of the zymogen through formation of a reversible covalent bond with the active site residue. Its function is as follows. Exhibits carboxy-monopeptidase as well as carboxy-dipeptidase activity. Plays an essential role in molting, a process during larval stages in which a new cuticle is formed and the old cuticle is shed. Required for the degradation and shedding of the old cuticle. The chain is Cathepsin Z from Onchocerca volvulus.